The sequence spans 273 residues: Dermonecrotic toxin LspiSicTox-betaIE1ii (273 aa).

H5 is a catalytic residue. 2 residues coordinate Mg(2+): E25 and D27. H41 serves as the catalytic Nucleophile. 2 cysteine pairs are disulfide-bonded: C45/C51 and C47/C189. D85 is a binding site for Mg(2+).

This sequence belongs to the arthropod phospholipase D family. Class II subfamily. The cofactor is Mg(2+). As to expression, expressed by the venom gland.

It is found in the secreted. It catalyses the reaction an N-(acyl)-sphingosylphosphocholine = an N-(acyl)-sphingosyl-1,3-cyclic phosphate + choline. It carries out the reaction an N-(acyl)-sphingosylphosphoethanolamine = an N-(acyl)-sphingosyl-1,3-cyclic phosphate + ethanolamine. The catalysed reaction is a 1-acyl-sn-glycero-3-phosphocholine = a 1-acyl-sn-glycero-2,3-cyclic phosphate + choline. The enzyme catalyses a 1-acyl-sn-glycero-3-phosphoethanolamine = a 1-acyl-sn-glycero-2,3-cyclic phosphate + ethanolamine. Functionally, dermonecrotic toxins cleave the phosphodiester linkage between the phosphate and headgroup of certain phospholipids (sphingolipid and lysolipid substrates), forming an alcohol (often choline) and a cyclic phosphate. This toxin acts on sphingomyelin (SM). It may also act on ceramide phosphoethanolamine (CPE), lysophosphatidylcholine (LPC) and lysophosphatidylethanolamine (LPE), but not on lysophosphatidylserine (LPS), and lysophosphatidylglycerol (LPG). It acts by transphosphatidylation, releasing exclusively cyclic phosphate products as second products. Induces dermonecrosis, hemolysis, increased vascular permeability, edema, inflammatory response, and platelet aggregation. The chain is Dermonecrotic toxin LspiSicTox-betaIE1ii from Loxosceles spinulosa (Recluse spider).